The primary structure comprises 410 residues: Multifunctional CCA protein (410 aa).

Gly8 and Arg11 together coordinate ATP. CTP contacts are provided by Gly8 and Arg11. Residues Glu21 and Asp23 each coordinate Mg(2+). Positions 91, 137, and 140 each coordinate ATP. CTP contacts are provided by Arg91, Arg137, and Arg140. The 102-residue stretch at 228 to 329 (TGIHSLMTLR…VKLLEQVDAF (102 aa)) folds into the HD domain.

This sequence belongs to the tRNA nucleotidyltransferase/poly(A) polymerase family. Bacterial CCA-adding enzyme type 1 subfamily. In terms of assembly, monomer. Can also form homodimers and oligomers. The cofactor is Mg(2+). It depends on Ni(2+) as a cofactor.

The enzyme catalyses a tRNA precursor + 2 CTP + ATP = a tRNA with a 3' CCA end + 3 diphosphate. The catalysed reaction is a tRNA with a 3' CCA end + 2 CTP + ATP = a tRNA with a 3' CCACCA end + 3 diphosphate. Functionally, catalyzes the addition and repair of the essential 3'-terminal CCA sequence in tRNAs without using a nucleic acid template. Adds these three nucleotides in the order of C, C, and A to the tRNA nucleotide-73, using CTP and ATP as substrates and producing inorganic pyrophosphate. tRNA 3'-terminal CCA addition is required both for tRNA processing and repair. Also involved in tRNA surveillance by mediating tandem CCA addition to generate a CCACCA at the 3' terminus of unstable tRNAs. While stable tRNAs receive only 3'-terminal CCA, unstable tRNAs are marked with CCACCA and rapidly degraded. The protein is Multifunctional CCA protein of Legionella pneumophila subsp. pneumophila (strain Philadelphia 1 / ATCC 33152 / DSM 7513).